The following is a 74-amino-acid chain: Transcription attenuation protein MtrB (74 aa).

Belongs to the MtrB family. Oligomer of 11 identical subunits arranged in doughnut-like structure.

Its function is as follows. Required for transcription attenuation control in the Trp operon. This trans-acting factor seems to recognize a 10 bases nucleotide sequence in the Trp leader transcript causing transcription termination. Binds the leader RNA only in presence of L-tryptophan. The sequence is that of Transcription attenuation protein MtrB from Geobacillus sp. (strain WCH70).